A 129-amino-acid polypeptide reads, in one-letter code: Protein HMF1 (129 aa).

Lys52 participates in a covalent cross-link: Glycyl lysine isopeptide (Lys-Gly) (interchain with G-Cter in ubiquitin).

The protein belongs to the RutC family.

Its subcellular location is the cytoplasm. It is found in the nucleus. The protein localises to the mitochondrion intermembrane space. This Saccharomyces cerevisiae (strain ATCC 204508 / S288c) (Baker's yeast) protein is Protein HMF1 (HMF1).